The primary structure comprises 583 residues: Thiol:disulfide interchange protein DsbD (583 aa).

Residues 1–20 (MLKRFIFLLVGITLTLSAHA) form the signal peptide. 2 cysteine pairs are disulfide-bonded: cysteine 123–cysteine 128 and cysteine 200–cysteine 322. A run of 8 helical transmembrane segments spans residues 185-205 (IFWF…LPML), 237-257 (LTYT…QVAL), 261-281 (PVLI…FGLF), 302-322 (GGAF…ASPC), 344-364 (GLAL…ITLF), 375-395 (WLLK…VFLL), 405-425 (PLMW…VIPT), and 433-453 (VRIV…NLVW). The region spanning 440–583 (TFAVASYPWA…NQFLNWLNQL (144 aa)) is the Thioredoxin domain. A disulfide bridge links cysteine 500 with cysteine 503.

Belongs to the thioredoxin family. DsbD subfamily.

Its subcellular location is the cell inner membrane. It carries out the reaction [protein]-dithiol + NAD(+) = [protein]-disulfide + NADH + H(+). The catalysed reaction is [protein]-dithiol + NADP(+) = [protein]-disulfide + NADPH + H(+). In terms of biological role, required to facilitate the formation of correct disulfide bonds in some periplasmic proteins and for the assembly of the periplasmic c-type cytochromes. Acts by transferring electrons from cytoplasmic thioredoxin to the periplasm. This transfer involves a cascade of disulfide bond formation and reduction steps. In Actinobacillus pleuropneumoniae serotype 5b (strain L20), this protein is Thiol:disulfide interchange protein DsbD.